The sequence spans 99 residues: UPF0751 protein BAMEG_A0107 (99 aa).

The protein belongs to the UPF0751 family.

The sequence is that of UPF0751 protein BAMEG_A0107 from Bacillus anthracis (strain CDC 684 / NRRL 3495).